The primary structure comprises 494 residues: Aspartyl/glutamyl-tRNA(Asn/Gln) amidotransferase subunit B (494 aa).

A disordered region spans residues 475-494; the sequence is TSGRADPKATNQMLAKKLKG.

This sequence belongs to the GatB/GatE family. GatB subfamily. As to quaternary structure, heterotrimer of A, B and C subunits.

The enzyme catalyses L-glutamyl-tRNA(Gln) + L-glutamine + ATP + H2O = L-glutaminyl-tRNA(Gln) + L-glutamate + ADP + phosphate + H(+). It catalyses the reaction L-aspartyl-tRNA(Asn) + L-glutamine + ATP + H2O = L-asparaginyl-tRNA(Asn) + L-glutamate + ADP + phosphate + 2 H(+). Allows the formation of correctly charged Asn-tRNA(Asn) or Gln-tRNA(Gln) through the transamidation of misacylated Asp-tRNA(Asn) or Glu-tRNA(Gln) in organisms which lack either or both of asparaginyl-tRNA or glutaminyl-tRNA synthetases. The reaction takes place in the presence of glutamine and ATP through an activated phospho-Asp-tRNA(Asn) or phospho-Glu-tRNA(Gln). The sequence is that of Aspartyl/glutamyl-tRNA(Asn/Gln) amidotransferase subunit B from Acaryochloris marina (strain MBIC 11017).